The following is a 350-amino-acid chain: Phenylalanine--tRNA ligase alpha subunit (350 aa).

E257 is a binding site for Mg(2+).

It belongs to the class-II aminoacyl-tRNA synthetase family. Phe-tRNA synthetase alpha subunit type 1 subfamily. As to quaternary structure, tetramer of two alpha and two beta subunits. Requires Mg(2+) as cofactor.

It is found in the cytoplasm. It carries out the reaction tRNA(Phe) + L-phenylalanine + ATP = L-phenylalanyl-tRNA(Phe) + AMP + diphosphate + H(+). This is Phenylalanine--tRNA ligase alpha subunit from Listeria monocytogenes serotype 4a (strain HCC23).